Consider the following 227-residue polypeptide: ATP synthase F(0) complex subunit a (227 aa).

6 helical membrane passes run 12-32 (PCLL…LLLP), 69-89 (WALL…LGLL), 98-118 (QLSM…LTGL), 139-159 (IPAL…ALGV), 170-190 (LLIQ…PSIS), and 196-216 (ILFL…YVFV).

The protein belongs to the ATPase A chain family. As to quaternary structure, component of the ATP synthase complex composed at least of ATP5F1A/subunit alpha, ATP5F1B/subunit beta, ATP5MC1/subunit c (homooctomer), MT-ATP6/subunit a, MT-ATP8/subunit 8, ATP5ME/subunit e, ATP5MF/subunit f, ATP5MG/subunit g, ATP5MK/subunit k, ATP5MJ/subunit j, ATP5F1C/subunit gamma, ATP5F1D/subunit delta, ATP5F1E/subunit epsilon, ATP5PF/subunit F6, ATP5PB/subunit b, ATP5PD/subunit d, ATP5PO/subunit OSCP. ATP synthase complex consists of a soluble F(1) head domain (subunits alpha(3) and beta(3)) - the catalytic core - and a membrane F(0) domain - the membrane proton channel (subunits c, a, 8, e, f, g, k and j). These two domains are linked by a central stalk (subunits gamma, delta, and epsilon) rotating inside the F1 region and a stationary peripheral stalk (subunits F6, b, d, and OSCP). Interacts with DNAJC30; interaction is direct.

Its subcellular location is the mitochondrion inner membrane. The enzyme catalyses H(+)(in) = H(+)(out). Its function is as follows. Subunit a, of the mitochondrial membrane ATP synthase complex (F(1)F(0) ATP synthase or Complex V) that produces ATP from ADP in the presence of a proton gradient across the membrane which is generated by electron transport complexes of the respiratory chain. ATP synthase complex consist of a soluble F(1) head domain - the catalytic core - and a membrane F(1) domain - the membrane proton channel. These two domains are linked by a central stalk rotating inside the F(1) region and a stationary peripheral stalk. During catalysis, ATP synthesis in the catalytic domain of F(1) is coupled via a rotary mechanism of the central stalk subunits to proton translocation. With the subunit c (ATP5MC1), forms the proton-conducting channel in the F(0) domain, that contains two crucial half-channels (inlet and outlet) that facilitate proton movement from the mitochondrial intermembrane space (IMS) into the matrix. Protons are taken up via the inlet half-channel and released through the outlet half-channel, following a Grotthuss mechanism. The sequence is that of ATP synthase F(0) complex subunit a from Gallus gallus (Chicken).